We begin with the raw amino-acid sequence, 470 residues long: 5-hydroxytryptamine receptor 2A (470 aa).

The disordered stretch occupies residues 1-23 (MDVLFEDNAPLSPTTSSLMPSNG). Over 1 to 80 (MDVLFEDNAP…LQEKNWSALL (80 aa)) the chain is Extracellular. Residues 10–21 (PLSPTTSSLMPS) are compositionally biased toward low complexity. Residues asparagine 38, asparagine 44, asparagine 51, and asparagine 54 are each glycosylated (N-linked (GlcNAc...) asparagine). The chain crosses the membrane as a helical span at residues 81–97 (TAVVIILTIAGNILVIM). Residues 98–111 (AVSLEKKLQNATNY) lie on the Cytoplasmic side of the membrane. Residues 112 to 137 (FLMSLAIADMLLGFLVMPVSMLTILY) traverse the membrane as a helical segment. Residues 138–146 (GYRWPLPSK) lie on the Extracellular side of the membrane. A helical transmembrane segment spans residues 147–171 (LCAVWIYLDVLFSTASIMHLCAISL). A disulfide bridge connects residues cysteine 148 and cysteine 227. Aspartate 155 contacts serotonin. Positions 172–174 (DRY) match the DRY motif; important for ligand-induced conformation changes motif. The Cytoplasmic segment spans residues 172–191 (DRYVAIQNPIHHSRFNSRTK). Residues 192-215 (AFLKIIAVWTISVGISMPIPVFGL) traverse the membrane as a helical segment. Topologically, residues 216–232 (QDDSKVFKEGSCLLADD) are extracellular. Residues 233–258 (NFVLIGSFVSFFIPLTIMVITYFLTI) form a helical membrane-spanning segment. The Cytoplasmic portion of the chain corresponds to 259–321 (KSLQKEATLC…QSISNEQKAC (63 aa)). The residue at position 280 (serine 280) is a Phosphoserine. The helical transmembrane segment at 322–347 (KVLGIVFFLFVVMWCPFFITNIMAVI) threads the bilayer. Residue asparagine 342 coordinates serotonin. Cysteine 348 and cysteine 352 form a disulfide bridge. At 348–355 (CKESCNED) the chain is on the extracellular side. A helical transmembrane segment spans residues 356–381 (IIGALLNVFVWIGYLSSAVNPLVYTL). Residues 375–379 (NPLVY) carry the NPxxY motif; important for ligand-induced conformation changes and signaling motif. At 382–470 (FNKTYRSAFS…NTVNEKVSCV (89 aa)) the chain is on the cytoplasmic side. Residues 468-470 (SCV) carry the PDZ-binding motif.

It belongs to the G-protein coupled receptor 1 family. Interacts (via C-terminus) with MPDZ and PATJ. May interact (via C-terminus) with MPP3, PRDX6, DLG4, DLG1, CASK, APBA1 and MAGI2. Interacts with GRM2 and DRD2; this may affect signaling. In terms of tissue distribution, ubiquitous.

It localises to the cell membrane. It is found in the cell projection. The protein resides in the dendrite. The protein localises to the axon. Its subcellular location is the cytoplasmic vesicle. It localises to the membrane. It is found in the caveola. The protein resides in the presynapse. Its activity is regulated as follows. G-protein coupled receptor activity is regulated by lipids: oleamide increases HTR2A-mediated activity. G-protein coupled receptor for 5-hydroxytryptamine (serotonin). Also functions as a receptor for various drugs and psychoactive substances, including mescaline, psilocybin, 1-(2,5-dimethoxy-4-iodophenyl)-2-aminopropane (DOI) and lysergic acid diethylamide (LSD). Ligand binding causes a conformation change that triggers signaling via guanine nucleotide-binding proteins (G proteins) and modulates the activity of downstream effectors. HTR2A is coupled to G(q)/G(11) G alpha proteins and activates phospholipase C-beta, releasing diacylglycerol (DAG) and inositol 1,4,5-trisphosphate (IP3) second messengers that modulate the activity of phosphatidylinositol 3-kinase and promote the release of Ca(2+) ions from intracellular stores, respectively. Beta-arrestin family members inhibit signaling via G proteins and mediate activation of alternative signaling pathways. Affects neural activity, perception, cognition and mood. Plays a role in the regulation of behavior, including responses to anxiogenic situations and psychoactive substances. Plays a role in intestinal smooth muscle contraction, and may play a role in arterial vasoconstriction. The chain is 5-hydroxytryptamine receptor 2A (HTR2A) from Canis lupus familiaris (Dog).